A 183-amino-acid polypeptide reads, in one-letter code: Adenine phosphoribosyltransferase (183 aa).

The protein belongs to the purine/pyrimidine phosphoribosyltransferase family. Homodimer.

The protein resides in the cytoplasm. The enzyme catalyses AMP + diphosphate = 5-phospho-alpha-D-ribose 1-diphosphate + adenine. Its pathway is purine metabolism; AMP biosynthesis via salvage pathway; AMP from adenine: step 1/1. Its function is as follows. Catalyzes a salvage reaction resulting in the formation of AMP, that is energically less costly than de novo synthesis. This is Adenine phosphoribosyltransferase from Shewanella piezotolerans (strain WP3 / JCM 13877).